The primary structure comprises 499 residues: Chaperone SurA (499 aa).

Positions 1–36 are cleaved as a signal peptide; that stretch reads MKRQEFALFSLTLMLSPWRRVLLPAVLAAMAGPALA. PpiC domains are found at residues 231–333 and 352–450; these read PTEF…KLTA and ITQT…QVEN.

It localises to the periplasm. The enzyme catalyses [protein]-peptidylproline (omega=180) = [protein]-peptidylproline (omega=0). Its function is as follows. Chaperone involved in the correct folding and assembly of outer membrane proteins. Recognizes specific patterns of aromatic residues and the orientation of their side chains, which are found more frequently in integral outer membrane proteins. May act in both early periplasmic and late outer membrane-associated steps of protein maturation. The polypeptide is Chaperone SurA (Cupriavidus pinatubonensis (strain JMP 134 / LMG 1197) (Cupriavidus necator (strain JMP 134))).